The following is a 197-amino-acid chain: MKLLDARKDHYRKLAHEQGFRSRAAYKLKELNQSYRIIGPGFYVLDLGCAPGGWTQMAIKLAGNQGKVMGIDLSYVEEIPGAEILRGDIEDENVVDDVMNYFERKVNAVICDLSPKVSGNWSVDHAKQISLNYDCTKIMDKVLAHKGNAVFKVFDGEYSMEFRDYVKKKFARINLTKPKASRKQSSELYYVCLGFIG.

5 residues coordinate S-adenosyl-L-methionine: G52, W54, D72, D88, and D112. K152 (proton acceptor) is an active-site residue.

The protein belongs to the class I-like SAM-binding methyltransferase superfamily. RNA methyltransferase RlmE family.

Its subcellular location is the cytoplasm. It catalyses the reaction uridine(2552) in 23S rRNA + S-adenosyl-L-methionine = 2'-O-methyluridine(2552) in 23S rRNA + S-adenosyl-L-homocysteine + H(+). Its function is as follows. Specifically methylates the uridine in position 2552 of 23S rRNA at the 2'-O position of the ribose in the fully assembled 50S ribosomal subunit. The sequence is that of Ribosomal RNA large subunit methyltransferase E from Nitrosopumilus maritimus (strain SCM1).